Consider the following 423-residue polypeptide: Inactive autotransporter heptosyltransferase BimC (423 aa).

The span at M1 to A10 shows a compositional bias: polar residues. Residues M1–P49 form a disordered region. Fe(3+)-binding residues include C371, C374, C390, and C402.

This sequence belongs to the glycosyltransferase 9 family. In terms of assembly, homotrimer or homotetramer. It depends on Fe(3+) as a cofactor.

The protein localises to the cell inner membrane. It localises to the cytoplasm. In terms of biological role, iron-binding protein which is required for the asymmetric polar distribution of the autotransporter BimA on the bacterial surface prior to its translocation into bacterial periplasm. Lacks heptosyltransferase activity. The polypeptide is Inactive autotransporter heptosyltransferase BimC (Burkholderia thailandensis (strain ATCC 700388 / DSM 13276 / CCUG 48851 / CIP 106301 / E264)).